The chain runs to 395 residues: GA-binding protein subunit beta-1 (395 aa).

The residue at position 2 (S2) is an N-acetylserine. ANK repeat units lie at residues 5–34 and 37–66; these read DLGK…PFTT and LGTS…SRDA. The residue at position 69 (K69) is an N6-acetyllysine. ANK repeat units lie at residues 70–99, 103–132, and 136–166; these read VDRT…DVNA, LKMT…DVHT, and FCKT…QINT. Residues 258 to 327 are transcription activation and HCFC1 interaction; the sequence is DGAIQQVVSS…ETVISEEPPA (70 aa). Residues K352 and K381 each carry the N6-acetyllysine modification.

Heterotetramer of two alpha and two beta subunits. Interacts with HCFC1, causing repression of transcriptional activity. Acetylated by EP300/p300. Deacetylated by SIRT7, promoting heterotetramerization and activity.

The protein resides in the nucleus. Its function is as follows. Transcription factor capable of interacting with purine rich repeats (GA repeats). Acts as a master regulator of nuclear-encoded mitochondrial genes. In terms of biological role, (Microbial infection) Necessary for the expression of the Adenovirus E4 gene. The polypeptide is GA-binding protein subunit beta-1 (GABPB1) (Homo sapiens (Human)).